An 86-amino-acid chain; its full sequence is Palustrin-3b (86 aa).

An N-terminal signal peptide occupies residues 1–22; sequence MFTLKKPLLLIVLLGIISLSLC. Positions 23–36 are excised as a propeptide; sequence EQERNADEDEESEI. Residues C81 and C86 are joined by a disulfide bond.

Expressed by the skin glands.

The protein resides in the secreted. In terms of biological role, antimicrobial peptide. This Odorrana versabilis (Chinese bamboo leaf odorous frog) protein is Palustrin-3b.